We begin with the raw amino-acid sequence, 472 residues long: Spliceosome-associated protein CWC27 homolog (472 aa).

The residue at position 2 (serine 2) is an N-acetylserine. A PPIase cyclophilin-type domain is found at 11–166 (TNGKVLLKTT…NPHKIKSCEV (156 aa)). N-linked (GlcNAc...) asparagine glycans are attached at residues asparagine 109 and asparagine 201. Positions 206 to 230 (SFGEEAEEEEEEVNRVSQSMKGKSK) form a coiled coil. Disordered regions lie at residues 206–386 (SFGE…DQTL) and 398–472 (QAIA…KERR). Residues 231-241 (SSHDLLKDDPH) are compositionally biased toward basic and acidic residues. Residues 257-268 (DLVDDGEDESAE) show a composition bias toward acidic residues. 3 stretches are compositionally biased toward basic and acidic residues: residues 269-286 (HDEY…ERIA), 304-347 (EVEK…KRSE), and 359-371 (EYRR…EALR). Positions 306–377 (EKKSVSRSEE…EALRKQQSKK (72 aa)) form a coiled coil. Residue serine 346 is modified to Phosphoserine. A compositionally biased stretch (acidic residues) spans 404–418 (PENDIPETEVEDDEG). 2 stretches are compositionally biased toward basic and acidic residues: residues 425–437 (QFED…KDAS) and 457–472 (RREE…KERR).

It belongs to the cyclophilin-type PPIase family. In terms of assembly, part of the activated spliceosome B/catalytic step 1 spliceosome, one of the forms of the spliceosome which has a well-formed active site but still cannot catalyze the branching reaction and is composed at least of 52 proteins, the U2, U5 and U6 snRNAs and the pre-mRNA. Recruited during early steps of activated spliceosome B maturation, it is probably one of the first proteins released from this complex as he matures to the spliceosome C complex. Component of the minor spliceosome, which splices U12-type introns.

It is found in the nucleus. As part of the spliceosome, plays a role in pre-mRNA splicing. Probable inactive PPIase with no peptidyl-prolyl cis-trans isomerase activity. As a component of the minor spliceosome, involved in the splicing of U12-type introns in pre-mRNAs. In Homo sapiens (Human), this protein is Spliceosome-associated protein CWC27 homolog.